The sequence spans 241 residues: Leucyl/phenylalanyl-tRNA--protein transferase (241 aa).

This sequence belongs to the L/F-transferase family.

It localises to the cytoplasm. It catalyses the reaction N-terminal L-lysyl-[protein] + L-leucyl-tRNA(Leu) = N-terminal L-leucyl-L-lysyl-[protein] + tRNA(Leu) + H(+). The catalysed reaction is N-terminal L-arginyl-[protein] + L-leucyl-tRNA(Leu) = N-terminal L-leucyl-L-arginyl-[protein] + tRNA(Leu) + H(+). The enzyme catalyses L-phenylalanyl-tRNA(Phe) + an N-terminal L-alpha-aminoacyl-[protein] = an N-terminal L-phenylalanyl-L-alpha-aminoacyl-[protein] + tRNA(Phe). Functions in the N-end rule pathway of protein degradation where it conjugates Leu, Phe and, less efficiently, Met from aminoacyl-tRNAs to the N-termini of proteins containing an N-terminal arginine or lysine. The sequence is that of Leucyl/phenylalanyl-tRNA--protein transferase from Neisseria meningitidis serogroup C (strain 053442).